The chain runs to 157 residues: Dihydrofolate reductase type 5 (157 aa).

One can recognise a DHFR domain in the interval 2-156; the sequence is KVSLMAAKAK…INYCYQIWQK (155 aa).

It belongs to the dihydrofolate reductase family. Homodimer.

It catalyses the reaction (6S)-5,6,7,8-tetrahydrofolate + NADP(+) = 7,8-dihydrofolate + NADPH + H(+). It participates in cofactor biosynthesis; tetrahydrofolate biosynthesis; 5,6,7,8-tetrahydrofolate from 7,8-dihydrofolate: step 1/1. In terms of biological role, key enzyme in folate metabolism. Catalyzes an essential reaction for de novo glycine and purine synthesis, and for DNA precursor synthesis. This is Dihydrofolate reductase type 5 (dhfrV) from Escherichia coli.